Reading from the N-terminus, the 123-residue chain is uncharacterized protein (123 aa).

The next 4 membrane-spanning stretches (helical) occupy residues 9–31 (LLLRFTLEIAALISLGVYAWISF), 38–56 (VLTLVLPIAVMIVWSVFAV), 67–91 (VIAVNGVTRLVIELLIFAMAVAALY), and 98–114 (VSIVFLCLIILHYIISA).

It to E.coli YhgE.

The protein localises to the cell membrane. This is an uncharacterized protein from Bacillus subtilis (strain 168).